The chain runs to 345 residues: Platelet-derived growth factor C (345 aa).

The first 22 residues, 1 to 22 (MLLFGFLLLTFALVSQRQGAEA), serve as a signal peptide directing secretion. N25 and N55 each carry an N-linked (GlcNAc...) asparagine glycan. The CUB domain maps to 46 to 163 (HEKIITVSAN…PGFCIHYTLL (118 aa)). 4 disulfides stabilise this stretch: C104/C124, C250/C294, C280/C335, and C287/C337.

The protein belongs to the PDGF/VEGF growth factor family. Homodimer; disulfide-linked. Interacts with PDGFRA homodimers, and with heterodimers formed by PDGFRA and PDGFRB. In terms of processing, proteolytic removal of the N-terminal CUB domain releasing the core domain is necessary for unmasking the receptor-binding epitopes of the core domain. Cleavage after basic residues in the hinge region (region connecting the CUB and growth factor domains) gives rise to the receptor-binding form.

It localises to the secreted. Growth factor that plays an essential role in the regulation of embryonic development, cell proliferation, cell migration, survival and chemotaxis. Potent mitogen and chemoattractant for cells of mesenchymal origin. Required for normal skeleton formation during embryonic development. Required for normal skin morphogenesis during embryonic development. Plays an important role in wound healing, in angiogenesis and blood vessel development. This is Platelet-derived growth factor C (PDGFC) from Gekko japonicus (Schlegel's Japanese gecko).